Consider the following 445-residue polypeptide: Ribosomal protein uS12 methylthiotransferase RimO (445 aa).

An MTTase N-terminal domain is found at 4–119 (IKVALVSLGC…LLESIKVFLK (116 aa)). Residues Cys-13, Cys-48, Cys-82, Cys-156, Cys-160, and Cys-163 each coordinate [4Fe-4S] cluster. The region spanning 142–372 (TTPTYTAYVR…MILQQSISKD (231 aa)) is the Radical SAM core domain. The 67-residue stretch at 375–441 (KEKIGKIYEV…EYDLIGVVYN (67 aa)) folds into the TRAM domain.

Belongs to the methylthiotransferase family. RimO subfamily. [4Fe-4S] cluster is required as a cofactor.

It localises to the cytoplasm. The catalysed reaction is L-aspartate(89)-[ribosomal protein uS12]-hydrogen + (sulfur carrier)-SH + AH2 + 2 S-adenosyl-L-methionine = 3-methylsulfanyl-L-aspartate(89)-[ribosomal protein uS12]-hydrogen + (sulfur carrier)-H + 5'-deoxyadenosine + L-methionine + A + S-adenosyl-L-homocysteine + 2 H(+). Its function is as follows. Catalyzes the methylthiolation of an aspartic acid residue of ribosomal protein uS12. This is Ribosomal protein uS12 methylthiotransferase RimO from Clostridium botulinum (strain Loch Maree / Type A3).